We begin with the raw amino-acid sequence, 517 residues long: Amidophosphoribosyltransferase (517 aa).

Met-1 is subject to N-acetylmethionine. A propeptide spanning residues 1–11 is cleaved from the precursor; sequence MELEELGIREE. The active-site Nucleophile is Cys-12. The Glutamine amidotransferase type-2 domain maps to 12-261; that stretch reads CGVFGCIASG…PGEIVEISRH (250 aa). Cys-280 serves as a coordination point for [4Fe-4S] cluster. Ser-327, Asp-389, and Asp-390 together coordinate Mg(2+). [4Fe-4S] cluster is bound by residues Cys-426, Cys-503, and Cys-506.

This sequence in the C-terminal section; belongs to the purine/pyrimidine phosphoribosyltransferase family. As to quaternary structure, homotetramer. Mg(2+) is required as a cofactor. Requires [4Fe-4S] cluster as cofactor. As to expression, ubiquitously expressed.

The catalysed reaction is 5-phospho-beta-D-ribosylamine + L-glutamate + diphosphate = 5-phospho-alpha-D-ribose 1-diphosphate + L-glutamine + H2O. It participates in purine metabolism; IMP biosynthesis via de novo pathway; N(1)-(5-phospho-D-ribosyl)glycinamide from 5-phospho-alpha-D-ribose 1-diphosphate: step 1/2. Its function is as follows. Catalyzes the formation of phosphoribosylamine from phosphoribosylpyrophosphate (PRPP) and glutamine. The protein is Amidophosphoribosyltransferase (PPAT) of Homo sapiens (Human).